Consider the following 397-residue polypeptide: Phosphoglycerate kinase (397 aa).

Substrate contacts are provided by residues 22–24 (DLN), arginine 37, 60–63 (HFGR), arginine 119, and arginine 152. ATP contacts are provided by residues lysine 202, glutamate 324, and 354-357 (GGDT).

It belongs to the phosphoglycerate kinase family. In terms of assembly, monomer.

It is found in the cytoplasm. The enzyme catalyses (2R)-3-phosphoglycerate + ATP = (2R)-3-phospho-glyceroyl phosphate + ADP. Its pathway is carbohydrate degradation; glycolysis; pyruvate from D-glyceraldehyde 3-phosphate: step 2/5. This is Phosphoglycerate kinase from Rhizorhabdus wittichii (strain DSM 6014 / CCUG 31198 / JCM 15750 / NBRC 105917 / EY 4224 / RW1) (Sphingomonas wittichii).